The primary structure comprises 236 residues: Biosynthetic peptidoglycan transglycosylase (236 aa).

Residues isoleucine 17–glycine 37 form a helical membrane-spanning segment.

This sequence belongs to the glycosyltransferase 51 family.

Its subcellular location is the cell inner membrane. It catalyses the reaction [GlcNAc-(1-&gt;4)-Mur2Ac(oyl-L-Ala-gamma-D-Glu-L-Lys-D-Ala-D-Ala)](n)-di-trans,octa-cis-undecaprenyl diphosphate + beta-D-GlcNAc-(1-&gt;4)-Mur2Ac(oyl-L-Ala-gamma-D-Glu-L-Lys-D-Ala-D-Ala)-di-trans,octa-cis-undecaprenyl diphosphate = [GlcNAc-(1-&gt;4)-Mur2Ac(oyl-L-Ala-gamma-D-Glu-L-Lys-D-Ala-D-Ala)](n+1)-di-trans,octa-cis-undecaprenyl diphosphate + di-trans,octa-cis-undecaprenyl diphosphate + H(+). It participates in cell wall biogenesis; peptidoglycan biosynthesis. In terms of biological role, peptidoglycan polymerase that catalyzes glycan chain elongation from lipid-linked precursors. The chain is Biosynthetic peptidoglycan transglycosylase from Rhodopseudomonas palustris (strain ATCC BAA-98 / CGA009).